Reading from the N-terminus, the 227-residue chain is Cytochrome c oxidase subunit 2 (227 aa).

The Mitochondrial intermembrane segment spans residues 1-14; the sequence is MAHRAQVGLQDATS. A helical transmembrane segment spans residues 15-45; sequence PIMEELVIFHDHALMIIFLICFLVLYALFLT. Residues 46 to 59 lie on the Mitochondrial matrix side of the membrane; the sequence is LTTKLTNTNISDAQ. A helical membrane pass occupies residues 60-87; the sequence is EMETIWTTLPAIILILIALPSLRILYLT. Over 88–227 the chain is Mitochondrial intermembrane; the sequence is DEINDPSFTI…IFEMGPVFAL (140 aa). The Cu cation site is built by H161, C196, E198, C200, H204, and M207. E198 is a Mg(2+) binding site.

Belongs to the cytochrome c oxidase subunit 2 family. As to quaternary structure, component of the cytochrome c oxidase (complex IV, CIV), a multisubunit enzyme composed of 14 subunits. The complex is composed of a catalytic core of 3 subunits MT-CO1, MT-CO2 and MT-CO3, encoded in the mitochondrial DNA, and 11 supernumerary subunits COX4I, COX5A, COX5B, COX6A, COX6B, COX6C, COX7A, COX7B, COX7C, COX8 and NDUFA4, which are encoded in the nuclear genome. The complex exists as a monomer or a dimer and forms supercomplexes (SCs) in the inner mitochondrial membrane with NADH-ubiquinone oxidoreductase (complex I, CI) and ubiquinol-cytochrome c oxidoreductase (cytochrome b-c1 complex, complex III, CIII), resulting in different assemblies (supercomplex SCI(1)III(2)IV(1) and megacomplex MCI(2)III(2)IV(2)). Found in a complex with TMEM177, COA6, COX18, COX20, SCO1 and SCO2. Interacts with TMEM177 in a COX20-dependent manner. Interacts with COX20. Interacts with COX16. The cofactor is Cu cation.

It localises to the mitochondrion inner membrane. The enzyme catalyses 4 Fe(II)-[cytochrome c] + O2 + 8 H(+)(in) = 4 Fe(III)-[cytochrome c] + 2 H2O + 4 H(+)(out). In terms of biological role, component of the cytochrome c oxidase, the last enzyme in the mitochondrial electron transport chain which drives oxidative phosphorylation. The respiratory chain contains 3 multisubunit complexes succinate dehydrogenase (complex II, CII), ubiquinol-cytochrome c oxidoreductase (cytochrome b-c1 complex, complex III, CIII) and cytochrome c oxidase (complex IV, CIV), that cooperate to transfer electrons derived from NADH and succinate to molecular oxygen, creating an electrochemical gradient over the inner membrane that drives transmembrane transport and the ATP synthase. Cytochrome c oxidase is the component of the respiratory chain that catalyzes the reduction of oxygen to water. Electrons originating from reduced cytochrome c in the intermembrane space (IMS) are transferred via the dinuclear copper A center (CU(A)) of subunit 2 and heme A of subunit 1 to the active site in subunit 1, a binuclear center (BNC) formed by heme A3 and copper B (CU(B)). The BNC reduces molecular oxygen to 2 water molecules using 4 electrons from cytochrome c in the IMS and 4 protons from the mitochondrial matrix. The sequence is that of Cytochrome c oxidase subunit 2 (MT-CO2) from Pongo pygmaeus (Bornean orangutan).